We begin with the raw amino-acid sequence, 416 residues long: Methylthioribose-1-phosphate isomerase (416 aa).

Residue D280 is the Proton donor of the active site.

Belongs to the eIF-2B alpha/beta/delta subunits family. MtnA subfamily.

Its subcellular location is the cytoplasm. It localises to the nucleus. The catalysed reaction is 5-(methylsulfanyl)-alpha-D-ribose 1-phosphate = 5-(methylsulfanyl)-D-ribulose 1-phosphate. It participates in amino-acid biosynthesis; L-methionine biosynthesis via salvage pathway; L-methionine from S-methyl-5-thio-alpha-D-ribose 1-phosphate: step 1/6. Functionally, catalyzes the interconversion of methylthioribose-1-phosphate (MTR-1-P) into methylthioribulose-1-phosphate (MTRu-1-P). The protein is Methylthioribose-1-phosphate isomerase of Candida albicans (strain SC5314 / ATCC MYA-2876) (Yeast).